The sequence spans 165 residues: Neurotrophin-3 (165 aa).

A signal peptide spans 1–3 (IQS). The propeptide occupies 4–119 (TSMDQGSLTE…VLNRTSRRKR (116 aa)). Asparagine 112 is a glycosylation site (N-linked (GlcNAc...) asparagine).

This sequence belongs to the NGF-beta family.

Its subcellular location is the secreted. Functionally, seems to promote the survival of visceral and proprioceptive sensory neurons. This is Neurotrophin-3 (NTF3) from Calabaria reinhardtii (Calabar boa).